A 1150-amino-acid polypeptide reads, in one-letter code: Fl(2)d-associated complex component (1150 aa).

The span at 1 to 10 shows a compositional bias: basic and acidic residues; it reads MEKKAKESLR. 4 disordered regions span residues 1 to 444, 477 to 710, 833 to 914, and 1034 to 1053; these read MEKK…EEER, QGRE…PPPL, ASED…MDTN, and KEQG…AKIP. The span at 11–20 shows a compositional bias: basic residues; that stretch reads RYKKAARHSA. Low complexity predominate over residues 21–44; the sequence is THSSSSDSTSDSDSGSSSYSSTDS. Positions 47-69 are enriched in gly residues; that stretch reads GVGGVGVGVGVPGGAGGPGGSGS. Basic residues predominate over residues 72-97; the sequence is GHPHTHGHGHHPRSAERHHRKKKSSR. Residues 98-107 show a composition bias toward low complexity; sequence RGGSSSGDEP. 2 stretches are compositionally biased toward basic residues: residues 110–144 and 162–175; these read SRRK…KKRA and AKLK…RLRA. Residues 122–147 adopt a coiled-coil conformation; sequence KKLVAKRNHIKRKLKEARLKKRAAAA. Residues 176-199 are compositionally biased toward basic and acidic residues; sequence ASKEQRERDKLRVVQRDRERDHHR. The span at 202-215 shows a compositional bias: low complexity; the sequence is SSRSPPSSSTTTTT. Residues 269–347 are a coiled coil; sequence PSLERERERE…KLRRQEEEEG (79 aa). Composition is skewed to basic and acidic residues over residues 270 to 414, 428 to 444, and 492 to 529; these read SLER…DEMR, YAPR…EEER, and PDER…PEWE. Residues 537–558 show a composition bias toward gly residues; it reads AGGGPGGPSGTPGRPGGFVGGP. 2 stretches are compositionally biased toward basic and acidic residues: residues 589 to 611 and 630 to 640; these read ERER…DRPD and WLEHDQREKPR. A compositionally biased stretch (pro residues) spans 660 to 669; it reads PPAPSHPHPA. Basic and acidic residues predominate over residues 693-702; it reads GHGDHGERPG. Over residues 851-861 the composition is skewed to low complexity; the sequence is QSLNLNQSLSS. Acidic residues predominate over residues 879 to 889; that stretch reads ELSEISDSDDD. Positions 890–903 are enriched in basic and acidic residues; the sequence is ILNKTDKVRPKNEL. Residues 905–914 show a composition bias toward acidic residues; sequence TETEQEMDTN.

This sequence belongs to the ZC3H13 family. Component of the WMM complex, a N6-methyltransferase complex composed of a catalytic subcomplex, named MAC, and of an associated subcomplex, named MACOM. The MAC subcomplex is composed of Ime4/Mettl3 and Mettl14. The MACOM subcomplex is composed of fl(2)d, Flacc/Xio, Hakai, vir, and, in some cases of nito. In terms of tissue distribution, widely expressed during embryogenesis but shows enrichment in the neuroectoderm.

The protein resides in the nucleus. Associated component of the WMM complex, a complex that mediates N6-methyladenosine (m6A) methylation of mRNAs, a modification that plays a role in the efficiency of mRNA splicing and is required for sex determination. In the WMM complex, acts as a key regulator of m6A methylation by bridging fl(2)d to the RNA-binding component nito. Required for sex determination and dosage compensation via Sxl alternative splicing: m6A methylation acts as a key regulator of Sxl pre-mRNA and promotes female-specific alternative splicing of Sxl, which determines female physiognomy. This chain is Fl(2)d-associated complex component, found in Drosophila melanogaster (Fruit fly).